The primary structure comprises 218 residues: Glutathione S-transferase Mu 1 (218 aa).

Residues 2–88 enclose the GST N-terminal domain; sequence PMILGYWNVR…YLARKHHLCG (87 aa). Residues 7–8, 43–46, Lys-50, and 59–60 contribute to the glutathione site; these read YW, RSQW, and NL. Ser-67 carries the phosphoserine modification. Residue 72-73 participates in glutathione binding; the sequence is QS. The region spanning 90 to 208 is the GST C-terminal domain; that stretch reads TEEERIRADI…KSSRYLSTPI (119 aa). A substrate-binding site is contributed by Tyr-116. Phosphoserine is present on residues Ser-205 and Ser-210.

Belongs to the GST superfamily. Mu family. As to quaternary structure, homodimer or heterodimer.

Its subcellular location is the cytoplasm. The catalysed reaction is RX + glutathione = an S-substituted glutathione + a halide anion + H(+). The enzyme catalyses prostaglandin A2 + glutathione = prostaglandin A2-S-(R)-glutathione. It carries out the reaction prostaglandin J2 + glutathione = prostaglandin J2-S-(R)-glutathione. It catalyses the reaction prostaglandin J2 + glutathione = prostaglandin J2-S-(S)-glutathione. The catalysed reaction is prostaglandin A2 + glutathione = prostaglandin A2-S-(S)-glutathione. The enzyme catalyses 11(S)-hydroxy-14(S),15(S)-epoxy-(5Z,8Z,12E)-eicosatrienoate + glutathione = (11S,15S)-dihydroxy-14(R)-S-glutathionyl-(5Z,8Z,12E)-eicosatrienoate. Functionally, conjugation of reduced glutathione to a wide number of exogenous and endogenous hydrophobic electrophiles. The olfactory GST may be crucial for the acuity of the olfactory process. Participates in the formation of novel hepoxilin regioisomers. This Rattus norvegicus (Rat) protein is Glutathione S-transferase Mu 1.